A 61-amino-acid polypeptide reads, in one-letter code: Large ribosomal subunit protein uL30 (61 aa).

This sequence belongs to the universal ribosomal protein uL30 family. In terms of assembly, part of the 50S ribosomal subunit.

The sequence is that of Large ribosomal subunit protein uL30 from Francisella tularensis subsp. tularensis (strain FSC 198).